Consider the following 143-residue polypeptide: Large ribosomal subunit protein uL11 (143 aa).

It belongs to the universal ribosomal protein uL11 family. Part of the ribosomal stalk of the 50S ribosomal subunit. Interacts with L10 and the large rRNA to form the base of the stalk. L10 forms an elongated spine to which L12 dimers bind in a sequential fashion forming a multimeric L10(L12)X complex. In terms of processing, one or more lysine residues are methylated.

Its function is as follows. Forms part of the ribosomal stalk which helps the ribosome interact with GTP-bound translation factors. This chain is Large ribosomal subunit protein uL11, found in Rhizobium johnstonii (strain DSM 114642 / LMG 32736 / 3841) (Rhizobium leguminosarum bv. viciae).